Reading from the N-terminus, the 290-residue chain is Lipoyl synthase (290 aa).

[4Fe-4S] cluster-binding residues include Cys-32, Cys-37, Cys-43, Cys-58, Cys-62, Cys-65, and Ser-272. The Radical SAM core domain occupies 44-261 (WGEGTATFMI…KEVAVSLGFK (218 aa)).

It belongs to the radical SAM superfamily. Lipoyl synthase family. [4Fe-4S] cluster serves as cofactor.

Its subcellular location is the cytoplasm. The enzyme catalyses [[Fe-S] cluster scaffold protein carrying a second [4Fe-4S](2+) cluster] + N(6)-octanoyl-L-lysyl-[protein] + 2 oxidized [2Fe-2S]-[ferredoxin] + 2 S-adenosyl-L-methionine + 4 H(+) = [[Fe-S] cluster scaffold protein] + N(6)-[(R)-dihydrolipoyl]-L-lysyl-[protein] + 4 Fe(3+) + 2 hydrogen sulfide + 2 5'-deoxyadenosine + 2 L-methionine + 2 reduced [2Fe-2S]-[ferredoxin]. The protein operates within protein modification; protein lipoylation via endogenous pathway; protein N(6)-(lipoyl)lysine from octanoyl-[acyl-carrier-protein]: step 2/2. In terms of biological role, catalyzes the radical-mediated insertion of two sulfur atoms into the C-6 and C-8 positions of the octanoyl moiety bound to the lipoyl domains of lipoate-dependent enzymes, thereby converting the octanoylated domains into lipoylated derivatives. In Pyrobaculum aerophilum (strain ATCC 51768 / DSM 7523 / JCM 9630 / CIP 104966 / NBRC 100827 / IM2), this protein is Lipoyl synthase.